The following is a 366-amino-acid chain: MTKLRVGLLFGGCSGEHEVSIRSAKVIATALTKVQNKEKYELIPIYIQKNGLWQPSDFSQKVLNSDHPSLLQLTNENNHDLNTSLTQQSSSPLWQIPPQAAQVDVWFPILHGPNGEDGTIQGLLKLMQVPFVGSGVLGSAMGMDKIAMKIAFDHAGLPQVKYQVVTRSQIWSNSCVFPKLCDDIETTLEYPCFVKPANLGSSVGIAKVRSRSELETALDNAASYDRRIIVEAGVEAKELECAVLGNDMPKASIVGEITYNSDFYDYETKYTEGKADLHIPARVSEAIATKIKEMATQAFLAVDAAGLARVDFFYVEKTGEILINEINTMPGFTSSSMYPMLWEASGIPFSELVDTLIQLALERHSK.

One can recognise an ATP-grasp domain in the interval 149 to 358; it reads KIAFDHAGLP…FSELVDTLIQ (210 aa). Residue 185–240 coordinates ATP; sequence ETTLEYPCFVKPANLGSSVGIAKVRSRSELETALDNAASYDRRIIVEAGVEAKELE. Mg(2+)-binding residues include Asp311, Glu325, and Asn327.

The protein belongs to the D-alanine--D-alanine ligase family. Mg(2+) is required as a cofactor. Mn(2+) serves as cofactor.

The protein resides in the cytoplasm. The catalysed reaction is 2 D-alanine + ATP = D-alanyl-D-alanine + ADP + phosphate + H(+). It participates in cell wall biogenesis; peptidoglycan biosynthesis. Its function is as follows. Cell wall formation. The chain is D-alanine--D-alanine ligase from Trichodesmium erythraeum (strain IMS101).